Reading from the N-terminus, the 230-residue chain is 2,3-bisphosphoglycerate-dependent phosphoglycerate mutase (230 aa).

Substrate contacts are provided by residues 8 to 15, 21 to 22, Arg-60, 87 to 90, Lys-98, 114 to 115, and 183 to 184; these read RHGESEWN, TG, ERHY, RR, and GN. Residue His-9 is the Tele-phosphohistidine intermediate of the active site. Glu-87 (proton donor/acceptor) is an active-site residue.

This sequence belongs to the phosphoglycerate mutase family. BPG-dependent PGAM subfamily.

It carries out the reaction (2R)-2-phosphoglycerate = (2R)-3-phosphoglycerate. The protein operates within carbohydrate degradation; glycolysis; pyruvate from D-glyceraldehyde 3-phosphate: step 3/5. In terms of biological role, catalyzes the interconversion of 2-phosphoglycerate and 3-phosphoglycerate. The chain is 2,3-bisphosphoglycerate-dependent phosphoglycerate mutase from Streptococcus sanguinis (strain SK36).